Reading from the N-terminus, the 326-residue chain is D-threonate 4-phosphate dehydrogenase (326 aa).

Residues His138 and Thr139 each contribute to the substrate site. Positions 168, 212, and 267 each coordinate a divalent metal cation. 3 residues coordinate substrate: Lys275, Asn284, and Arg293.

It belongs to the PdxA family. PdxA2 subfamily. In terms of assembly, homodimer. A divalent metal cation is required as a cofactor.

The enzyme catalyses 4-O-phospho-D-threonate + NAD(+) = dihydroxyacetone phosphate + CO2 + NADH. In terms of biological role, catalyzes the NAD-dependent oxidation and subsequent decarboxylation of D-threonate 4-phosphate to produce dihydroxyacetone phosphate (DHAP). Can also use 4-hydroxy-L-threonine 4-phosphate as substrate. The chain is D-threonate 4-phosphate dehydrogenase from Pectobacterium atrosepticum (strain SCRI 1043 / ATCC BAA-672) (Erwinia carotovora subsp. atroseptica).